The chain runs to 246 residues: 1-(5-phosphoribosyl)-5-[(5-phosphoribosylamino)methylideneamino] imidazole-4-carboxamide isomerase (246 aa).

The active-site Proton acceptor is D10.

It belongs to the HisA/HisF family.

Its subcellular location is the cytoplasm. It carries out the reaction 1-(5-phospho-beta-D-ribosyl)-5-[(5-phospho-beta-D-ribosylamino)methylideneamino]imidazole-4-carboxamide = 5-[(5-phospho-1-deoxy-D-ribulos-1-ylimino)methylamino]-1-(5-phospho-beta-D-ribosyl)imidazole-4-carboxamide. It functions in the pathway amino-acid biosynthesis; L-histidine biosynthesis; L-histidine from 5-phospho-alpha-D-ribose 1-diphosphate: step 4/9. The sequence is that of 1-(5-phosphoribosyl)-5-[(5-phosphoribosylamino)methylideneamino] imidazole-4-carboxamide isomerase from Corynebacterium efficiens (strain DSM 44549 / YS-314 / AJ 12310 / JCM 11189 / NBRC 100395).